The following is a 121-amino-acid chain: Large ribosomal subunit protein bL21c (121 aa).

It belongs to the bacterial ribosomal protein bL21 family. Part of the 50S ribosomal subunit.

It localises to the plastid. Its subcellular location is the chloroplast. This protein binds to 23S rRNA. This is Large ribosomal subunit protein bL21c from Chaetosphaeridium globosum (Charophycean green alga).